Consider the following 299-residue polypeptide: Tryptophan prenyltransferase ComQ (299 aa).

Residues aspartate 67 and aspartate 71 each contribute to the Mg(2+) site.

Belongs to the FPP/GGPP synthase family. The cofactor is Mg(2+).

The protein localises to the cell membrane. The enzyme catalyses L-tryptophyl-[protein] + (2E,6E)-farnesyl diphosphate = (2S,3R)-3-farnesyl-2,3-dihydro-2,N(alpha)-cyclo-L-tryptophyl-[protein] + diphosphate. Functionally, part of a major quorum-sensing system that regulates the development of genetic competence. Involved in the maturation of the competence pheromone ComX. Acts by catalyzing the transfer of a farnesyl group on the ComX pheromone. Shows weak geranylation activity with geranyl diphosphate (GPP). The polypeptide is Tryptophan prenyltransferase ComQ (Bacillus subtilis (strain 168)).